The chain runs to 334 residues: Protein U17/U16 (334 aa).

The protein belongs to the herpesviridae US22 family. Isoform 1 is not glycosylated.

Its function is as follows. Isoform 3 can transactivate the human immunodeficiency virus type 1 promoter. The sequence is that of Protein U17/U16 (U17/U16) from Homo sapiens (Human).